The chain runs to 301 residues: Putative hydro-lyase C5H10.01 (301 aa).

It belongs to the D-glutamate cyclase family.

The sequence is that of Putative hydro-lyase C5H10.01 from Schizosaccharomyces pombe (strain 972 / ATCC 24843) (Fission yeast).